The chain runs to 84 residues: Small ribosomal subunit protein bS16 (84 aa).

This sequence belongs to the bacterial ribosomal protein bS16 family.

The sequence is that of Small ribosomal subunit protein bS16 from Dichelobacter nodosus (strain VCS1703A).